The sequence spans 325 residues: GTPase Era (325 aa).

One can recognise an Era-type G domain in the interval 30 to 198; it reads HCGFVAIVGR…KKHVRDHLPK (169 aa). A G1 region spans residues 38–45; the sequence is GRPNVGKS. Residue 38–45 coordinates GTP; that stretch reads GRPNVGKS. The tract at residues 64–68 is G2; that stretch reads QTTRH. The interval 85 to 88 is G3; the sequence is DTPG. GTP contacts are provided by residues 85-89 and 147-150; these read DTPGL and NKVD. The tract at residues 147 to 150 is G4; that stretch reads NKVD. The segment at 177-179 is G5; the sequence is ISA. Residues 221–307 form the KH type-2 domain; sequence VREKLMRFTG…YLETWVKVKS (87 aa).

The protein belongs to the TRAFAC class TrmE-Era-EngA-EngB-Septin-like GTPase superfamily. Era GTPase family. In terms of assembly, monomer.

The protein localises to the cytoplasm. It localises to the cell inner membrane. Its function is as follows. An essential GTPase that binds both GDP and GTP, with rapid nucleotide exchange. Plays a role in 16S rRNA processing and 30S ribosomal subunit biogenesis and possibly also in cell cycle regulation and energy metabolism. This Vibrio cholerae serotype O1 (strain ATCC 39315 / El Tor Inaba N16961) protein is GTPase Era.